Reading from the N-terminus, the 186-residue chain is Large ribosomal subunit protein uL5 (186 aa).

Belongs to the universal ribosomal protein uL5 family. As to quaternary structure, part of the 50S ribosomal subunit; part of the 5S rRNA/L5/L18/L25 subcomplex. Contacts the 5S rRNA and the P site tRNA. Forms a bridge to the 30S subunit in the 70S ribosome.

Its function is as follows. This is one of the proteins that bind and probably mediate the attachment of the 5S RNA into the large ribosomal subunit, where it forms part of the central protuberance. In the 70S ribosome it contacts protein S13 of the 30S subunit (bridge B1b), connecting the 2 subunits; this bridge is implicated in subunit movement. Contacts the P site tRNA; the 5S rRNA and some of its associated proteins might help stabilize positioning of ribosome-bound tRNAs. This chain is Large ribosomal subunit protein uL5, found in Mycoplasmopsis synoviae (strain 53) (Mycoplasma synoviae).